We begin with the raw amino-acid sequence, 211 residues long: Proteasome subunit beta (211 aa).

Positions 1–9 are cleaved as a propeptide — removed in mature form; by autocatalysis; the sequence is MSEAETLKG. Thr-10 serves as the catalytic Nucleophile.

It belongs to the peptidase T1B family. In terms of assembly, the 20S proteasome core is composed of 14 alpha and 14 beta subunits that assemble into four stacked heptameric rings, resulting in a barrel-shaped structure. The two inner rings, each composed of seven catalytic beta subunits, are sandwiched by two outer rings, each composed of seven alpha subunits. The catalytic chamber with the active sites is on the inside of the barrel. Has a gated structure, the ends of the cylinder being occluded by the N-termini of the alpha-subunits. Is capped at one or both ends by the proteasome regulatory ATPase, PAN.

It localises to the cytoplasm. It catalyses the reaction Cleavage of peptide bonds with very broad specificity.. Its activity is regulated as follows. The formation of the proteasomal ATPase PAN-20S proteasome complex, via the docking of the C-termini of PAN into the intersubunit pockets in the alpha-rings, triggers opening of the gate for substrate entry. Interconversion between the open-gate and close-gate conformations leads to a dynamic regulation of the 20S proteasome proteolysis activity. Functionally, component of the proteasome core, a large protease complex with broad specificity involved in protein degradation. This Methanosphaerula palustris (strain ATCC BAA-1556 / DSM 19958 / E1-9c) protein is Proteasome subunit beta.